We begin with the raw amino-acid sequence, 394 residues long: 1-acylglycerol-3-phosphate O-acyltransferase ICT1 (394 aa).

The 308-residue stretch at 74-381 folds into the AB hydrolase-1 domain; that stretch reads VLIHGYAASS…AGHNLFLDNP (308 aa). The HXXXXD motif motif lies at 374-379; it reads HNLFLD.

The protein belongs to the peptidase S33 family. ABHD4/ABHD5 subfamily.

The enzyme catalyses a 1-acyl-sn-glycero-3-phosphate + an acyl-CoA = a 1,2-diacyl-sn-glycero-3-phosphate + CoA. Lysophosphatidic acid acyltransferase involved in membrane remodeling leading to increased organic solvent tolerance. Involved in resistance to azoles and copper. This is 1-acylglycerol-3-phosphate O-acyltransferase ICT1 (ICT1) from Saccharomyces cerevisiae (strain ATCC 204508 / S288c) (Baker's yeast).